We begin with the raw amino-acid sequence, 84 residues long: MPYVLISTQIRMETGPTIVGDEFSDTQLMAQLEADKRTVLGNNFSEYCVNEPPRVTLNKLEKLGYRVVSMTGVGQTLVWCLHKE.

It belongs to the GFRP family. As to quaternary structure, homopentamer. Forms a complex with GCH1 where a GCH1 homodecamer is sandwiched by two GFRP homopentamers.

It localises to the nucleus. It is found in the nucleus membrane. The protein localises to the cytoplasm. The protein resides in the cytosol. In terms of biological role, mediates tetrahydrobiopterin inhibition of GTP cyclohydrolase 1. The chain is GTP cyclohydrolase 1 feedback regulatory protein (gchfr) from Xenopus tropicalis (Western clawed frog).